A 116-amino-acid polypeptide reads, in one-letter code: Putative pterin-4-alpha-carbinolamine dehydratase (116 aa).

It belongs to the pterin-4-alpha-carbinolamine dehydratase family.

The catalysed reaction is (4aS,6R)-4a-hydroxy-L-erythro-5,6,7,8-tetrahydrobiopterin = (6R)-L-erythro-6,7-dihydrobiopterin + H2O. The polypeptide is Putative pterin-4-alpha-carbinolamine dehydratase (Stenotrophomonas maltophilia (strain K279a)).